Consider the following 361-residue polypeptide: MKKTLAALIVGAFAASAANAAVVYNNEGTNVELGGRLSIIAEQSNSTVDNQKQQHGALRNQGSRFHIKATHNFGDGFYAQGYLETRFVTKASENGSDNFGDITSKYAYVTLGNKAFGEVKLGRAKTIADGITSAEDKEYGVLNNSDYIPTSGNTVGYTFKGIDGLVLGANYLLAQKREGAKGENKRPNDKAGEVRIGEINNGIQVGAKYDANDIVAKIAYGRTNYKYNESDEHKQQLNGVLATLGYRFSDLGLLVSLDSGYAKTKNYKIKHEKRYFVSPGFQYELMEDTNVYGNFKYERTSVDQGEKTREQAVLFGVDHKLHKQLLTYIEGAYARTRTTETGKGVKTEKEKSVGVGLRVYF.

The first 20 residues, 1-20, serve as a signal peptide directing secretion; it reads MKKTLAALIVGAFAASAANA.

Belongs to the Gram-negative porin family. As to quaternary structure, homotrimer.

The protein localises to the cell outer membrane. Functionally, forms pores that allow passive diffusion of small molecules across the outer membrane. In Haemophilus influenzae, this protein is Outer membrane protein P2 (ompP2).